The sequence spans 831 residues: Serine/threonine-protein kinase ATG1 (831 aa).

A Protein kinase domain is found at tyrosine 21 to valine 321. ATP-binding positions include isoleucine 27 to valine 35 and lysine 50. Aspartate 168 functions as the Proton acceptor in the catalytic mechanism. 2 stretches are compositionally biased toward polar residues: residues glutamine 360 to arginine 382 and asparagine 405 to lysine 419. The segment at glutamine 360–lysine 419 is disordered.

The protein belongs to the protein kinase superfamily. Ser/Thr protein kinase family. APG1/unc-51/ULK1 subfamily. As to quaternary structure, homodimer. Forms a ternary complex with ATG13 and ATG17.

It is found in the cytoplasm. Its subcellular location is the preautophagosomal structure membrane. The enzyme catalyses L-seryl-[protein] + ATP = O-phospho-L-seryl-[protein] + ADP + H(+). It catalyses the reaction L-threonyl-[protein] + ATP = O-phospho-L-threonyl-[protein] + ADP + H(+). Serine/threonine protein kinase involved in the cytoplasm to vacuole transport (Cvt) and found to be essential in autophagy, where it is required for the formation of autophagosomes. Involved in the clearance of protein aggregates which cannot be efficiently cleared by the proteasome. Required for selective autophagic degradation of the nucleus (nucleophagy) as well as for mitophagy which contributes to regulate mitochondrial quantity and quality by eliminating the mitochondria to a basal level to fulfill cellular energy requirements and preventing excess ROS production. Also involved in endoplasmic reticulum-specific autophagic process, in selective removal of ER-associated degradation (ERAD) substrates. Plays a key role in ATG9 and ATG23 cycling through the pre-autophagosomal structure and is necessary to promote ATG18 binding to ATG9 through phosphorylation of ATG9. Catalyzes phosphorylation of ATG4, decreasing the interaction between ATG4 and ATG8 and impairing deconjugation of PE-conjugated forms of ATG8. This chain is Serine/threonine-protein kinase ATG1, found in Kluyveromyces lactis (strain ATCC 8585 / CBS 2359 / DSM 70799 / NBRC 1267 / NRRL Y-1140 / WM37) (Yeast).